We begin with the raw amino-acid sequence, 269 residues long: uncharacterized protein (269 aa).

Residues 152–197 (RYFSKPAYRNAFKANTIRATTAYKKVFNDPSLGSTYPLEVPLGKMS) form the RPE1 insert domain.

This is an uncharacterized protein from Rickettsia prowazekii (strain Madrid E).